We begin with the raw amino-acid sequence, 127 residues long: Fluoride-specific ion channel FluC (127 aa).

Transmembrane regions (helical) follow at residues 4 to 24 (SILAIALGAALGALLRWFLGL), 36 to 56 (GTLLANLVGGYVIGAAIAYFA), 68 to 88 (LIITGFCGGLTTFSTFSAEVV), and 99 to 119 (AAGAIATHVSGSLLMTLLGLF). 2 residues coordinate Na(+): Gly75 and Thr78.

Belongs to the fluoride channel Fluc/FEX (TC 1.A.43) family.

It localises to the cell inner membrane. It catalyses the reaction fluoride(in) = fluoride(out). Its activity is regulated as follows. Na(+) is not transported, but it plays an essential structural role and its presence is essential for fluoride channel function. In terms of biological role, fluoride-specific ion channel. Important for reducing fluoride concentration in the cell, thus reducing its toxicity. In Pseudomonas aeruginosa (strain UCBPP-PA14), this protein is Fluoride-specific ion channel FluC.